The primary structure comprises 186 residues: Peptidyl-tRNA hydrolase (186 aa).

A tRNA-binding site is contributed by tyrosine 16. The Proton acceptor role is filled by histidine 21. Residues tyrosine 60 and asparagine 62 each coordinate tRNA.

It belongs to the PTH family. As to quaternary structure, monomer.

Its subcellular location is the cytoplasm. The enzyme catalyses an N-acyl-L-alpha-aminoacyl-tRNA + H2O = an N-acyl-L-amino acid + a tRNA + H(+). In terms of biological role, hydrolyzes ribosome-free peptidyl-tRNAs (with 1 or more amino acids incorporated), which drop off the ribosome during protein synthesis, or as a result of ribosome stalling. Its function is as follows. Catalyzes the release of premature peptidyl moieties from peptidyl-tRNA molecules trapped in stalled 50S ribosomal subunits, and thus maintains levels of free tRNAs and 50S ribosomes. This is Peptidyl-tRNA hydrolase from Tropheryma whipplei (strain TW08/27) (Whipple's bacillus).